The chain runs to 722 residues: Solute carrier organic anion transporter family member 4C1 (722 aa).

The segment at 1–81 (MQGSKGIENP…PGSQLSELEE (81 aa)) is disordered. The Cytoplasmic segment spans residues 1–101 (MQGSKGIENP…QCLQRCNTPQ (101 aa)). Ser-15 and Ser-16 each carry phosphoserine. Position 19 is a phosphothreonine (Thr-19). Ser-24, Ser-26, and Ser-28 each carry phosphoserine. A compositionally biased stretch (polar residues) spans 25–46 (ASPSQVEVSAVASRNQNGGSQP). A helical membrane pass occupies residues 102–122 (GFLLHYCLLALTQGIVVNGLV). The Extracellular portion of the chain corresponds to 123 to 141 (NISISTIEKRYEMKSSLTG). A helical membrane pass occupies residues 142 to 162 (LISSSYDISFCVLSLFVSFFG). Topologically, residues 163–168 (ERGHKP) are cytoplasmic. The chain crosses the membrane as a helical span at residues 169-193 (RWLAFASFMIGLGALVFSLPHFFSG). The Extracellular segment spans residues 194 to 218 (RYELGSIFEDTCLTRNSTRCSSSTS). A helical transmembrane segment spans residues 219 to 249 (LLSNYFYVFVLGQLLLGTGGTPLYTLGTAFI). Over 250–269 (DDSVPTHKSSLYIGIGYSMS) the chain is Cytoplasmic. The helical transmembrane segment at 270 to 290 (ILGPAIGYVLGGQLLTMYIDI) threads the bilayer. Residues 291–306 (AMGQSSDLTEDDPRWL) are Extracellular-facing. Residues 307-331 (GAWWIGFLLAWLFAWSLIMPFSCFP) traverse the membrane as a helical segment. Residues 332 to 376 (KHLPGTAKIQAGKTSQTHQNNSTSFQHTDENFGKSIKDFPTAVKN) lie on the Cytoplasmic side of the membrane. Residues 377 to 398 (LMRNTVFICLVLSTTSEALITT) traverse the membrane as a helical segment. Residues 399–418 (GFATFLPKFIENQFGLTSSF) lie on the Extracellular side of the membrane. Residues 419-442 (AATLGGAVLIPGAALGQILGGVLV) traverse the membrane as a helical segment. At 443–446 (SKFK) the chain is on the cytoplasmic side. The helical transmembrane segment at 447–470 (MKCKNTMKFALCTSGVALVLSFVF) threads the bilayer. Residues 471-578 (IYAKCENEPF…RTRCSNLPIF (108 aa)) lie on the Extracellular side of the membrane. One can recognise a Kazal-like domain in the interval 494–549 (GNLTAPCNANCNCLRSYYYPLCGSDGIQYFSPCFAGCLNSVSNRKPKVYYNCSCIE). Intrachain disulfides connect Cys-500/Cys-530, Cys-506/Cys-526, and Cys-515/Cys-547. Residues 579–601 (LGIFFITVIFTFMAGTPITVSIL) form a helical membrane-spanning segment. Residues 602 to 610 (RCVNHRHRS) lie on the Cytoplasmic side of the membrane. A helical transmembrane segment spans residues 611–636 (LALGVQFMLLRLLGTIPGPIIFGVII). Residues 637 to 670 (DSTCVLWDVNECGIKGACWIYDNIKMAHMLVAIS) lie on the Extracellular side of the membrane. The helical transmembrane segment at 671–688 (VTCKVITIFFNGLAIVLY) threads the bilayer. The Cytoplasmic segment spans residues 689–722 (KPPPPGTEVSFQSQNVIVSTISVEEDLDKAENEG).

This sequence belongs to the organo anion transporter (TC 2.A.60) family. In terms of tissue distribution, strongly expressed in initial segment of epididymis and seminal vesicles.

Its subcellular location is the basolateral cell membrane. The enzyme catalyses estrone 3-sulfate(out) = estrone 3-sulfate(in). It catalyses the reaction L-thyroxine(out) = L-thyroxine(in). It carries out the reaction 3,3',5-triiodo-L-thyronine(out) = 3,3',5-triiodo-L-thyronine(in). The catalysed reaction is chenodeoxycholate(out) = chenodeoxycholate(in). The enzyme catalyses glycocholate(out) = glycocholate(in). It catalyses the reaction L-homoarginine(in) = L-homoarginine(out). It carries out the reaction L-arginine(in) = L-arginine(out). The catalysed reaction is N(omega),N(omega)-dimethyl-L-arginine(out) = N(omega),N(omega)-dimethyl-L-arginine(in). Mediates the transport of organic anions such as steroids (estrone 3-sulfate, chenodeoxycholate, glycocholate) and thyroid hormones (3,3',5-triiodo-L-thyronine (T3), L-thyroxine (T4)), in the kidney. Capable of transporting cAMP and pharmacological substances such as digoxin, ouabain and methotrexate. Transport is independent of sodium, chloride ion, and ATP. Transport activity is stimulated by an acidic extracellular environment due to increased substrate affinity to the transporter. The driving force for this transport activity is currently not known. The role of hydrogencarbonate (HCO3(-), bicarbonate) as the probable counteranion that exchanges for organic anions is still not well defined. Functions as an uptake transporter at the apical membrane, suggesting a role in renal reabsorption. Involved in the renal secretion of the uremic toxin ADMA (N(omega),N(omega)-dimethyl-L-arginine or asymmetrical dimethylarginine), which is associated to cardiovascular events and mortality, and the structurally related amino acids L-arginine and L-homoarginine (a cardioprotective biomarker). Can act bidirectionally, suggesting a dual protective role of this transport protein; exporting L-homoarginine after being synthesized in proximal tubule cells, and mediating uptake of ADMA from the blood into proximal tubule cells where it is degraded by the enzyme dimethylarginine dimethylaminohydrolase 1 (DDAH1). May be involved in sperm maturation by enabling directed movement of organic anions and compounds within or between cells. This ion-transporting process is important to maintain the strict epididymal homeostasis necessary for sperm maturation. May have a role in secretory functions since seminal vesicle epithelial cells are assumed to secrete proteins involved in decapacitation by modifying surface proteins to facilitate the acquisition of the ability to fertilize the egg. The chain is Solute carrier organic anion transporter family member 4C1 from Mus musculus (Mouse).